We begin with the raw amino-acid sequence, 208 residues long: ATP-dependent Clp protease proteolytic subunit (208 aa).

Ser-98 serves as the catalytic Nucleophile. The active site involves His-123.

It belongs to the peptidase S14 family. In terms of assembly, fourteen ClpP subunits assemble into 2 heptameric rings which stack back to back to give a disk-like structure with a central cavity, resembling the structure of eukaryotic proteasomes.

It localises to the cytoplasm. The catalysed reaction is Hydrolysis of proteins to small peptides in the presence of ATP and magnesium. alpha-casein is the usual test substrate. In the absence of ATP, only oligopeptides shorter than five residues are hydrolyzed (such as succinyl-Leu-Tyr-|-NHMec, and Leu-Tyr-Leu-|-Tyr-Trp, in which cleavage of the -Tyr-|-Leu- and -Tyr-|-Trp bonds also occurs).. Its function is as follows. Cleaves peptides in various proteins in a process that requires ATP hydrolysis. Has a chymotrypsin-like activity. Plays a major role in the degradation of misfolded proteins. The protein is ATP-dependent Clp protease proteolytic subunit of Wolbachia sp. subsp. Drosophila simulans (strain wRi).